A 272-amino-acid chain; its full sequence is Phosphoribosylformylglycinamidine synthase subunit PurQ (272 aa).

The 236-residue stretch at 8-243 (VLVMSGYGIN…SEPEYQLKKE (236 aa)) folds into the Glutamine amidotransferase type-1 domain. C98 (nucleophile) is an active-site residue. Catalysis depends on residues H225, E227, and E235.

In terms of assembly, part of the FGAM synthase complex composed of 1 PurL, 1 PurQ and 2 PurS subunits.

It localises to the cytoplasm. The catalysed reaction is N(2)-formyl-N(1)-(5-phospho-beta-D-ribosyl)glycinamide + L-glutamine + ATP + H2O = 2-formamido-N(1)-(5-O-phospho-beta-D-ribosyl)acetamidine + L-glutamate + ADP + phosphate + H(+). The enzyme catalyses L-glutamine + H2O = L-glutamate + NH4(+). It participates in purine metabolism; IMP biosynthesis via de novo pathway; 5-amino-1-(5-phospho-D-ribosyl)imidazole from N(2)-formyl-N(1)-(5-phospho-D-ribosyl)glycinamide: step 1/2. Its function is as follows. Part of the phosphoribosylformylglycinamidine synthase complex involved in the purines biosynthetic pathway. Catalyzes the ATP-dependent conversion of formylglycinamide ribonucleotide (FGAR) and glutamine to yield formylglycinamidine ribonucleotide (FGAM) and glutamate. The FGAM synthase complex is composed of three subunits. PurQ produces an ammonia molecule by converting glutamine to glutamate. PurL transfers the ammonia molecule to FGAR to form FGAM in an ATP-dependent manner. PurS interacts with PurQ and PurL and is thought to assist in the transfer of the ammonia molecule from PurQ to PurL. This chain is Phosphoribosylformylglycinamidine synthase subunit PurQ, found in Methanococcus maripaludis (strain C7 / ATCC BAA-1331).